The following is a 495-amino-acid chain: uncharacterized protein (495 aa).

In terms of domain architecture, TRAM spans 16 to 74 (SSKRGDLIELAVTALDEDGNGIGTHDGTNVHVIGALPDERVRARLTHVGKRHLHAEAVE). C88, C94, C97, and C175 together coordinate [4Fe-4S] cluster. S-adenosyl-L-methionine-binding residues include Q299, Y328, E349, and N397. The Nucleophile role is filled by C424. Residues 472–483 (DRLESPAKERSR) are compositionally biased toward basic and acidic residues. Positions 472–495 (DRLESPAKERSRPRASHKAKGGAV) are disordered. The span at 484 to 495 (PRASHKAKGGAV) shows a compositional bias: basic residues.

The protein belongs to the class I-like SAM-binding methyltransferase superfamily. RNA M5U methyltransferase family.

This is an uncharacterized protein from Geobacter sulfurreducens (strain ATCC 51573 / DSM 12127 / PCA).